Here is a 319-residue protein sequence, read N- to C-terminus: Acetyl-coenzyme A carboxylase carboxyl transferase subunit beta (319 aa).

In terms of domain architecture, CoA carboxyltransferase N-terminal spans 24–293 (LWIKCPDTGQ…MIEQEPEPSA (270 aa)). The tract at residues 282 to 319 (PEMIEQEPEPSAPVPPDEPDEPAATQEAPPAAPAAPPA) is disordered.

Belongs to the AccD/PCCB family. Acetyl-CoA carboxylase is a heterohexamer composed of biotin carboxyl carrier protein (AccB), biotin carboxylase (AccC) and two subunits each of ACCase subunit alpha (AccA) and ACCase subunit beta (AccD).

It localises to the cytoplasm. It carries out the reaction N(6)-carboxybiotinyl-L-lysyl-[protein] + acetyl-CoA = N(6)-biotinyl-L-lysyl-[protein] + malonyl-CoA. Its pathway is lipid metabolism; malonyl-CoA biosynthesis; malonyl-CoA from acetyl-CoA: step 1/1. Component of the acetyl coenzyme A carboxylase (ACC) complex. Biotin carboxylase (BC) catalyzes the carboxylation of biotin on its carrier protein (BCCP) and then the CO(2) group is transferred by the transcarboxylase to acetyl-CoA to form malonyl-CoA. This chain is Acetyl-coenzyme A carboxylase carboxyl transferase subunit beta, found in Nitrobacter winogradskyi (strain ATCC 25391 / DSM 10237 / CIP 104748 / NCIMB 11846 / Nb-255).